The chain runs to 315 residues: Probable serine acetyltransferase 4 (315 aa).

The interval 287-315 is disordered; the sequence is AKPIIGKKAAPQRRPEELPGVTMEQRWSD.

It belongs to the transferase hexapeptide repeat family. As to quaternary structure, homomultimer.

The enzyme catalyses L-serine + acetyl-CoA = O-acetyl-L-serine + CoA. It participates in amino-acid biosynthesis; L-cysteine biosynthesis; L-cysteine from L-serine: step 1/2. This Oryza sativa subsp. japonica (Rice) protein is Probable serine acetyltransferase 4 (SAT4).